The chain runs to 257 residues: 1-(5-phosphoribosyl)-5-[(5-phosphoribosylamino)methylideneamino] imidazole-4-carboxamide isomerase (257 aa).

The active-site Proton acceptor is the aspartate 8. The Proton donor role is filled by aspartate 131.

The protein belongs to the HisA/HisF family.

It is found in the cytoplasm. The enzyme catalyses 1-(5-phospho-beta-D-ribosyl)-5-[(5-phospho-beta-D-ribosylamino)methylideneamino]imidazole-4-carboxamide = 5-[(5-phospho-1-deoxy-D-ribulos-1-ylimino)methylamino]-1-(5-phospho-beta-D-ribosyl)imidazole-4-carboxamide. It participates in amino-acid biosynthesis; L-histidine biosynthesis; L-histidine from 5-phospho-alpha-D-ribose 1-diphosphate: step 4/9. The sequence is that of 1-(5-phosphoribosyl)-5-[(5-phosphoribosylamino)methylideneamino] imidazole-4-carboxamide isomerase from Nitrosospira multiformis (strain ATCC 25196 / NCIMB 11849 / C 71).